The primary structure comprises 35 residues: Riboflavin-binding protein (35 aa).

C5 and C32 form a disulfide bridge.

The protein belongs to the folate receptor family.

Required for the transport of riboflavin to the developing oocyte. This chain is Riboflavin-binding protein, found in Struthio camelus (Common ostrich).